The primary structure comprises 224 residues: Putative adhesin A1C_06425 (224 aa).

Residues 1-22 (MKKLLLIATTSATILSSSISFA) form the signal peptide.

This is Putative adhesin A1C_06425 from Rickettsia akari (strain Hartford).